Consider the following 281-residue polypeptide: Sulfur carrier protein FdhD (281 aa).

Cys-117 (cysteine persulfide intermediate) is an active-site residue.

The protein belongs to the FdhD family.

The protein resides in the cytoplasm. Its function is as follows. Required for formate dehydrogenase (FDH) activity. Acts as a sulfur carrier protein that transfers sulfur from IscS to the molybdenum cofactor prior to its insertion into FDH. This chain is Sulfur carrier protein FdhD, found in Xanthomonas euvesicatoria pv. vesicatoria (strain 85-10) (Xanthomonas campestris pv. vesicatoria).